Here is a 331-residue protein sequence, read N- to C-terminus: Bifunctional nuclease 1 (331 aa).

The BFN domain maps to 126–261 (CVQNNPRVLR…RIAYNNGLKV (136 aa)). One can recognise a UVR domain in the interval 291–326 (EAQEFDLVRNMLVAAVEERYKDAAQYRDQLFMFRAK).

Belongs to the bifunctional nuclease family.

The protein localises to the nucleus. In terms of biological role, bifunctional nuclease with both RNase and DNase activities. Involved in basal defense response. Participates in abscisic acid-derived callose deposition following infection by a necrotrophic pathogen. In Oryza sativa subsp. indica (Rice), this protein is Bifunctional nuclease 1 (BBD1).